The following is a 137-amino-acid chain: Small ribosomal subunit protein uS9 (137 aa).

Residues 103–137 (PPLKAEGYLTRDPRAKERKKYGLHKARKAPQYSKR) are disordered. Over residues 118–137 (KERKKYGLHKARKAPQYSKR) the composition is skewed to basic residues.

This sequence belongs to the universal ribosomal protein uS9 family.

The chain is Small ribosomal subunit protein uS9 from Crocosphaera subtropica (strain ATCC 51142 / BH68) (Cyanothece sp. (strain ATCC 51142)).